The following is a 98-amino-acid chain: NADH-ubiquinone oxidoreductase chain 4L (98 aa).

3 helical membrane-spanning segments follow: residues 1–21, 28–48, and 59–79; these read MAPI…GVLI, STLL…TLLI, and APLI…ALLV.

This sequence belongs to the complex I subunit 4L family. Core subunit of respiratory chain NADH dehydrogenase (Complex I) which is composed of 45 different subunits.

The protein resides in the mitochondrion inner membrane. The enzyme catalyses a ubiquinone + NADH + 5 H(+)(in) = a ubiquinol + NAD(+) + 4 H(+)(out). Core subunit of the mitochondrial membrane respiratory chain NADH dehydrogenase (Complex I) which catalyzes electron transfer from NADH through the respiratory chain, using ubiquinone as an electron acceptor. Part of the enzyme membrane arm which is embedded in the lipid bilayer and involved in proton translocation. In Perameles gunnii (Eastern barred bandicoot), this protein is NADH-ubiquinone oxidoreductase chain 4L (MT-ND4L).